The chain runs to 727 residues: MSSYQQNPIGSFGGLYGSGGIEKSSQIIGNYRLDKTLGIGSFGKVKLAEHIRTGVKVAIKILNRTKIKNLKMDEKIRREIQNMKLFRHPHIIKLYEVIETTTDIFMVMEYVTGGELFEYIVKNGKLLEDESRRLFQQMISGVDYCHHHMVVHRDLKPENLLLDPINKCIKIADFGLSNMMQDGDFLKTSCGSPNYAAPEVISGKLYAGPEVDVWSCGVILYAFLCAKLPFDDESIPMLFKKIREGVFSIPDFVSPSCADLIKKMLVVDPVKRITIHEIRNHPWFQVKLPKYLSSPHTFLSKSIQTINNSILNEMVQVYAPIDRERIIEELQKSGEVNDLIVSYHLLVDSKRGSYENEINSPNLVSPITTPIMSSAQKSPIMFTTTTGFNPSNSNSISNNNNNNNNNNNNTTNNNNNTTNNNNSIINNNNINNNNINNNNNNNNNNINNNNIINNNNNNNNNNNNNNNNNNNNNNNNNNNSSISGGTEVFSISPNLNNSYNSNSSGNSNGSNSNNNSNNNTNNDNNNNNNNNNNNNNNNNNNNNNNNNNNNCIDSVNNSLNNENDVNNSNINNNNNNNSDDGSNNNSYEGGGDVLLLSDLNGNNQLGGNDNGNVVNLNNNFQLLNSLDLNSDIQTQPHRKWYLGAISQLPPHEIMGEIYRALKKVGFEWKLTGPYQLRCRMVNGKPIKLVLQLFRVAENRYLLDIKKIEGEIFIFFDICSLMLEELNL.

Residues 31–284 enclose the Protein kinase domain; that stretch reads YRLDKTLGIG…IHEIRNHPWF (254 aa). ATP-binding positions include 37-45 and K60; that span reads LGIGSFGKV. D154 (proton acceptor) is an active-site residue. A Phosphothreonine modification is found at T188. The tract at residues 382–590 is disordered; sequence FTTTTGFNPS…GSNNNSYEGG (209 aa). 2 stretches are compositionally biased toward low complexity: residues 391-483 and 494-586; these read SNSN…SSIS and NLNN…NNNS. The 49-residue stretch at 679-727 folds into the KA1 domain; sequence RMVNGKPIKLVLQLFRVAENRYLLDIKKIEGEIFIFFDICSLMLEELNL.

Belongs to the protein kinase superfamily. CAMK Ser/Thr protein kinase family. SNF1 subfamily. As to quaternary structure, heterotrimer of an alpha catalytic subunit, a beta and a gamma non-catalytic subunits.

It catalyses the reaction L-seryl-[protein] + ATP = O-phospho-L-seryl-[protein] + ADP + H(+). The enzyme catalyses L-threonyl-[protein] + ATP = O-phospho-L-threonyl-[protein] + ADP + H(+). Activated enzyme phosphorylates target proteins and initiates downstream signaling pathways that shift metabolism from anabolic to catabolic pathways. Acts as a highly sensitive cellular energy sensor. The chain is 5'-AMP-activated serine/threonine-protein kinase catalytic subunit alpha (snfA) from Dictyostelium discoideum (Social amoeba).